The chain runs to 332 residues: tRNA U34 carboxymethyltransferase (332 aa).

Carboxy-S-adenosyl-L-methionine contacts are provided by residues Lys91, Trp105, Lys110, Gly130, 152 to 154 (DPS), 181 to 182 (IE), Met196, Tyr200, and Arg315.

Belongs to the class I-like SAM-binding methyltransferase superfamily. CmoB family. As to quaternary structure, homotetramer.

It carries out the reaction carboxy-S-adenosyl-L-methionine + 5-hydroxyuridine(34) in tRNA = 5-carboxymethoxyuridine(34) in tRNA + S-adenosyl-L-homocysteine + H(+). Functionally, catalyzes carboxymethyl transfer from carboxy-S-adenosyl-L-methionine (Cx-SAM) to 5-hydroxyuridine (ho5U) to form 5-carboxymethoxyuridine (cmo5U) at position 34 in tRNAs. This chain is tRNA U34 carboxymethyltransferase, found in Shewanella sp. (strain W3-18-1).